A 231-amino-acid chain; its full sequence is Endonuclease NucS (231 aa).

Belongs to the NucS endonuclease family.

The protein resides in the cytoplasm. Functionally, cleaves both 3' and 5' ssDNA extremities of branched DNA structures. The sequence is that of Endonuclease NucS from Arthrobacter sp. (strain FB24).